A 1016-amino-acid chain; its full sequence is UvrABC system protein A (1016 aa).

32 to 39 (GVSGSGKS) is an ATP binding site. Residues 259 to 286 (CPEHGSVLEELEPRSFSFNSPYGACGDC) form a C4-type zinc finger. ABC transporter domains are found at residues 315–627 (WTKK…KNSL) and 647–975 (GNGK…EYLR). 679–686 (GPSGSGKS) is an ATP binding site. A C4-type zinc finger spans residues 778–804 (CEHCKGDGVMKIEMNFLPDIYVPCEVC). Positions 984-1016 (EPRARGEKAEKPAKAKAPAKKRTKKQTELVEAD) are disordered. Positions 985–996 (PRARGEKAEKPA) are enriched in basic and acidic residues.

Belongs to the ABC transporter superfamily. UvrA family. In terms of assembly, forms a heterotetramer with UvrB during the search for lesions.

It localises to the cytoplasm. In terms of biological role, the UvrABC repair system catalyzes the recognition and processing of DNA lesions. UvrA is an ATPase and a DNA-binding protein. A damage recognition complex composed of 2 UvrA and 2 UvrB subunits scans DNA for abnormalities. When the presence of a lesion has been verified by UvrB, the UvrA molecules dissociate. This Deinococcus radiodurans (strain ATCC 13939 / DSM 20539 / JCM 16871 / CCUG 27074 / LMG 4051 / NBRC 15346 / NCIMB 9279 / VKM B-1422 / R1) protein is UvrABC system protein A.